Reading from the N-terminus, the 119-residue chain is MARIKGGIATHKRHKKVLALTKGHASARHSLFKRAHESMVHAMSYAFAHRRARKGDMRRLWITRINAAARAEGLTYGELMSGLKTAGIDINRKVLADMAVSDSVAFAAVAAKAAAAKAN.

It belongs to the bacterial ribosomal protein bL20 family.

In terms of biological role, binds directly to 23S ribosomal RNA and is necessary for the in vitro assembly process of the 50S ribosomal subunit. It is not involved in the protein synthesizing functions of that subunit. This Dehalococcoides mccartyi (strain ATCC BAA-2266 / KCTC 15142 / 195) (Dehalococcoides ethenogenes (strain 195)) protein is Large ribosomal subunit protein bL20.